Here is a 139-residue protein sequence, read N- to C-terminus: MDTIGYHYVVEAAGCDPEVIADPNKIREIFLEAAKVGNMEVKASYFFKFSPMGVSGVVIVAESHISVHTWPEKGYAALDVYTCGEKADPEKAVDYILEKFKAKYAHVSELKRGIEEEDSTFTHTILTWEEKLDRRNGNK.

Catalysis depends on S63, which acts as the Schiff-base intermediate with substrate; via pyruvic acid. S63 carries the pyruvic acid (Ser); by autocatalysis modification. The Proton acceptor; for processing activity role is filled by H68. Residue C83 is the Proton donor; for catalytic activity of the active site.

Belongs to the prokaryotic AdoMetDC family. Type 1 subfamily. As to quaternary structure, heterotetramer of two alpha and two beta chains arranged as a dimer of alpha/beta heterodimers. The cofactor is pyruvate. Is synthesized initially as an inactive proenzyme. Formation of the active enzyme involves a self-maturation process in which the active site pyruvoyl group is generated from an internal serine residue via an autocatalytic post-translational modification. Two non-identical subunits are generated from the proenzyme in this reaction, and the pyruvate is formed at the N-terminus of the alpha chain, which is derived from the carboxyl end of the proenzyme. The post-translation cleavage follows an unusual pathway, termed non-hydrolytic serinolysis, in which the side chain hydroxyl group of the serine supplies its oxygen atom to form the C-terminus of the beta chain, while the remainder of the serine residue undergoes an oxidative deamination to produce ammonia and the pyruvoyl group blocking the N-terminus of the alpha chain.

It catalyses the reaction S-adenosyl-L-methionine + H(+) = S-adenosyl 3-(methylsulfanyl)propylamine + CO2. It participates in amine and polyamine biosynthesis; S-adenosylmethioninamine biosynthesis; S-adenosylmethioninamine from S-adenosyl-L-methionine: step 1/1. Functionally, catalyzes the decarboxylation of S-adenosylmethionine to S-adenosylmethioninamine (dcAdoMet), the propylamine donor required for the synthesis of the polyamines spermine and spermidine from the diamine putrescine. This Pyrococcus furiosus (strain ATCC 43587 / DSM 3638 / JCM 8422 / Vc1) protein is S-adenosylmethionine decarboxylase proenzyme.